Here is a 959-residue protein sequence, read N- to C-terminus: Translation initiation factor IF-2 (959 aa).

Residues 1–10 (MSDKTNDDKT) are compositionally biased toward basic and acidic residues. The tract at residues 1-374 (MSDKTNDDKT…SQMQETREKI (374 aa)) is disordered. The segment covering 27–37 (EQSTVRQNFSH) has biased composition (polar residues). Low complexity-rich tracts occupy residues 63–118 (AAAA…VTKP) and 128–138 (QRPGGQQAQRP). 2 stretches are compositionally biased toward basic and acidic residues: residues 154–225 (SEMD…EAAK) and 232–241 (ARSERRDDAR). Residues 246–284 (GARPQQAGRPQGGRPQPAGRPQQGSPRPAPIIADAAPIA) show a composition bias toward low complexity. Basic and acidic residues predominate over residues 318 to 333 (PEVRAPKVVKGEDDRR). The region spanning 457–626 (SRPPVVTIMG…LLQAEMLDLK (170 aa)) is the tr-type G domain. The G1 stretch occupies residues 466 to 473 (GHVDHGKT). GTP is bound at residue 466-473 (GHVDHGKT). The segment at 491–495 (GITQH) is G2. Residues 512–515 (DTPG) are G3. GTP-binding positions include 512–516 (DTPGH) and 566–569 (NKID). The tract at residues 566 to 569 (NKID) is G4. The segment at 602-604 (SAK) is G5.

The protein belongs to the TRAFAC class translation factor GTPase superfamily. Classic translation factor GTPase family. IF-2 subfamily.

The protein localises to the cytoplasm. One of the essential components for the initiation of protein synthesis. Protects formylmethionyl-tRNA from spontaneous hydrolysis and promotes its binding to the 30S ribosomal subunits. Also involved in the hydrolysis of GTP during the formation of the 70S ribosomal complex. The protein is Translation initiation factor IF-2 of Brucella abortus (strain 2308).